Reading from the N-terminus, the 324-residue chain is Glyoxylate/hydroxypyruvate reductase B (324 aa).

Catalysis depends on residues arginine 237 and glutamate 266. Histidine 285 serves as the catalytic Proton donor.

It belongs to the D-isomer specific 2-hydroxyacid dehydrogenase family. GhrB subfamily. In terms of assembly, homodimer.

The protein localises to the cytoplasm. The enzyme catalyses glycolate + NADP(+) = glyoxylate + NADPH + H(+). It carries out the reaction (R)-glycerate + NAD(+) = 3-hydroxypyruvate + NADH + H(+). It catalyses the reaction (R)-glycerate + NADP(+) = 3-hydroxypyruvate + NADPH + H(+). Catalyzes the NADPH-dependent reduction of glyoxylate and hydroxypyruvate into glycolate and glycerate, respectively. The polypeptide is Glyoxylate/hydroxypyruvate reductase B (Escherichia coli O6:K15:H31 (strain 536 / UPEC)).